A 919-amino-acid chain; its full sequence is GPI ethanolamine phosphate transferase 1 (919 aa).

Residues 1 to 9 are Cytoplasmic-facing; the sequence is MWNKTRTTL. The chain crosses the membrane as a helical span at residues 10-30; that stretch reads LAVGVLFHLFYLWSIFDIYFI. At 31 to 457 the chain is on the lumenal side; that stretch reads SPLVHGMSPY…TTYNWRFIRT (427 aa). N-linked (GlcNAc...) asparagine glycans are attached at residues Asn-90, Asn-138, Asn-198, Asn-202, Asn-286, and Asn-312. Residues 458 to 478 traverse the membrane as a helical segment; that stretch reads IVTFGFVGWIFFSFIIFLKSF. The Cytoplasmic segment spans residues 479-488; the sequence is ILENVIDDQK. A helical transmembrane segment spans residues 489–509; it reads ASPLSHAVFGSIGILLNWILF. Residues 510–512 lie on the Lumenal side of the membrane; it reads YQH. A helical transmembrane segment spans residues 513–533; that stretch reads SPFNFYMYLLFPLYFWSYIFT. The Cytoplasmic portion of the chain corresponds to 534–553; sequence NRSVLRSGIKEFFKGTSPWK. Residues 554-574 form a helical membrane-spanning segment; that stretch reads RVLITISIISVYEGIVYGFFH. Residues 575 to 576 are Lumenal-facing; that stretch reads RW. A helical transmembrane segment spans residues 577 to 597; it reads TFTLITNILAFYPFICGVREL. Ser-598 is a topological domain (cytoplasmic). Residues 599–619 form a helical membrane-spanning segment; the sequence is VNILWIITSVLLSTFTLFDAV. Residues 620–626 lie on the Lumenal side of the membrane; that stretch reads KIEDLNQ. The chain crosses the membrane as a helical span at residues 627-647; that stretch reads IHLAGLLIILSAFYALYKIHS. Topologically, residues 648–655 are cytoplasmic; sequence RINSYTRA. A helical transmembrane segment spans residues 656–676; sequence IFAIQISLVAAMLAVTHRSVI. At 677-687 the chain is on the lumenal side; it reads SLQLRQGLPRE. The helical transmembrane segment at 688–708 threads the bilayer; it reads SQVAGWIIFFVSLFVMPILHY. At 709–720 the chain is on the cytoplasmic side; the sequence is RKPNNDYKVRLL. A helical membrane pass occupies residues 721-741; the sequence is IIYLTFAPSFIILTISFESLF. Topologically, residues 742–776 are lumenal; the sequence is YFLFTSYMVQWIEIENKIKEMKTQKDENWLQVLRV. Residues 777–797 form a helical membrane-spanning segment; that stretch reads SVIGFFLLQVAFFGTGNVASI. At 798 to 807 the chain is on the cytoplasmic side; the sequence is SSFSLESVCR. A helical transmembrane segment spans residues 808–828; sequence LLPIFDPFLMGALLMLKLIIP. Residues 829–848 are Lumenal-facing; it reads YGLLSTCLGILNLKLNFKDY. The helical transmembrane segment at 849–869 threads the bilayer; that stretch reads TISSLIISMSDILSLNFFYLL. Topologically, residues 870-885 are cytoplasmic; it reads RTEGSWLDIGITISNY. A helical membrane pass occupies residues 886–906; sequence CLAILSSLFMLILEVLGHVLL. The Lumenal portion of the chain corresponds to 907–919; it reads KNVIIQDKTKKTQ.

It belongs to the PIGG/PIGN/PIGO family. PIGN subfamily. Interacts with CSF1; CSF1 channels phosphatidylethanolamine to MCD4 in the endoplasmic reticulum at contact sites to support GPI anchor biosynthesis. Post-translationally, N-glycosylated.

It is found in the endoplasmic reticulum membrane. Its subcellular location is the golgi apparatus membrane. It localises to the vacuole membrane. It functions in the pathway glycolipid biosynthesis; glycosylphosphatidylinositol-anchor biosynthesis. Its function is as follows. Ethanolamine phosphate transferase involved in glycosylphosphatidylinositol-anchor biosynthesis. Transfers ethanolamine phosphate to the first alpha-1,4-linked mannose of the glycosylphosphatidylinositol precursor of GPI-anchor. Ethanolamine phosphate on the alpha-1,4-linked mannose is essential for further mannosylation by GPI10 and is necessary for an efficient recognition of GPI lipids and GPI proteins by the GPI transamidase, for the efficient transport of GPI anchored proteins from endoplasmic reticulum to Golgi and for the physiological incorporation of ceramides into GPI anchors by lipid remodeling. Also involved in non-mitochondrial ATP movements across membrane and participates in Golgi and endoplasmic reticulum function, Also required for the incorporation of BGL2 into the cell wall. The sequence is that of GPI ethanolamine phosphate transferase 1 (MCD4) from Saccharomyces cerevisiae (strain ATCC 204508 / S288c) (Baker's yeast).